Consider the following 163-residue polypeptide: uncharacterized protein (163 aa).

A disordered region spans residues 23-113 (DFPEEPPLWV…QVADGVHSQQ (91 aa)). Serine 102 carries the phosphoserine modification.

This is an uncharacterized protein from Mus musculus (Mouse).